A 450-amino-acid polypeptide reads, in one-letter code: Phosphoglucosamine mutase (450 aa).

S101 (phosphoserine intermediate) is an active-site residue. Residues S101, D240, D242, and D244 each contribute to the Mg(2+) site. Phosphoserine is present on S101.

Belongs to the phosphohexose mutase family. The cofactor is Mg(2+). Activated by phosphorylation.

It catalyses the reaction alpha-D-glucosamine 1-phosphate = D-glucosamine 6-phosphate. In terms of biological role, catalyzes the conversion of glucosamine-6-phosphate to glucosamine-1-phosphate. The chain is Phosphoglucosamine mutase from Streptococcus thermophilus (strain ATCC BAA-250 / LMG 18311).